The following is a 288-amino-acid chain: MSQFSFTKMHGLGNSYIYVNMFEEQIPEEDLALVAEKVSNINTGIGADGMILICPSDVAPVKMRMFNNDGSEGKSCGNGLRCVAKYAYEHKLVEDTVFTIETLAGIVTAEVTVEEGKVTLAKIDMGAPRLTRAEIPMLGEGETPFIRENFLYNNHRYAFTAVSMGNPHAVIFVDDVEQAPLTTLGPVLETHEMFPERVNVEFIEILNEEEMNFRVWERGSGVTQACGTGACAAVVASILNGKMERGKEITVHLAGGDLMIAWTEEGNVLMKGPAEVICHGVYEYKIEA.

Residues Asn-14 and Asn-67 each coordinate substrate. Cys-76 functions as the Proton donor in the catalytic mechanism. Substrate-binding positions include 77-78, Asn-166, Asn-199, and 217-218; these read GN and ER. Catalysis depends on Cys-226, which acts as the Proton acceptor. 227-228 is a substrate binding site; the sequence is GT.

This sequence belongs to the diaminopimelate epimerase family. In terms of assembly, homodimer.

It localises to the cytoplasm. It carries out the reaction (2S,6S)-2,6-diaminopimelate = meso-2,6-diaminopimelate. It functions in the pathway amino-acid biosynthesis; L-lysine biosynthesis via DAP pathway; DL-2,6-diaminopimelate from LL-2,6-diaminopimelate: step 1/1. In terms of biological role, catalyzes the stereoinversion of LL-2,6-diaminopimelate (L,L-DAP) to meso-diaminopimelate (meso-DAP), a precursor of L-lysine and an essential component of the bacterial peptidoglycan. The polypeptide is Diaminopimelate epimerase (Bacillus cereus (strain 03BB102)).